We begin with the raw amino-acid sequence, 221 residues long: Urease accessory protein UreE (221 aa).

Residues 160-194 form a disordered region; it reads VPGTNKTTGDLAEEEQETERHEPHAHAIGEHHHEK. Residues 177–194 are compositionally biased toward basic and acidic residues; sequence TERHEPHAHAIGEHHHEK.

Belongs to the UreE family.

It is found in the cytoplasm. Its function is as follows. Involved in urease metallocenter assembly. Binds nickel. Probably functions as a nickel donor during metallocenter assembly. The polypeptide is Urease accessory protein UreE (Bifidobacterium longum subsp. infantis (strain ATCC 15697 / DSM 20088 / JCM 1222 / NCTC 11817 / S12)).